The primary structure comprises 375 residues: MKIIADENMPYVDVLFGELGEIEYVNGRTLAPEQLADADVLLVRSVTQVNEALLCQNQQLKFVGSATIGTDHVDTAYLKSRGIPFTNAPGCNATAVGEYAFIAMLELAQRYRQPLKDKKVAVIGAGNTGTATARCLEAYGVEHRLCDPVLAAQGDNRQFYELDELIAWADVISLHVPITKGGDHPTWYLFDQQRLEALKTGAWLLNCCRGEVIDNRALIEVKQRRVDIKLVLDVWEGEPSPMLALVPLVDIATPHIAGYSLEGKARGTFMLYEALCRVMGKTGENSFHSLLPPFFLGSMQVRELGDERALLTLCRTVYDLRDDDIHFRQSGTDRLGFDKMRKNHRHRREFSALKLENAKGSEVNWLSFLGFSNVG.

Substrate contacts are provided by S45 and T67. D147 is an NAD(+) binding site. R209 is a catalytic residue. D233 provides a ligand contact to NAD(+). E238 is a catalytic residue. The active-site Proton donor is the H255. G258 lines the NAD(+) pocket. Y259 provides a ligand contact to substrate.

This sequence belongs to the D-isomer specific 2-hydroxyacid dehydrogenase family. PdxB subfamily. As to quaternary structure, homodimer.

The protein localises to the cytoplasm. The catalysed reaction is 4-phospho-D-erythronate + NAD(+) = (R)-3-hydroxy-2-oxo-4-phosphooxybutanoate + NADH + H(+). The protein operates within cofactor biosynthesis; pyridoxine 5'-phosphate biosynthesis; pyridoxine 5'-phosphate from D-erythrose 4-phosphate: step 2/5. In terms of biological role, catalyzes the oxidation of erythronate-4-phosphate to 3-hydroxy-2-oxo-4-phosphonooxybutanoate. The protein is Erythronate-4-phosphate dehydrogenase of Shewanella amazonensis (strain ATCC BAA-1098 / SB2B).